The primary structure comprises 599 residues: DNA mismatch repair protein MutL (599 aa).

It belongs to the DNA mismatch repair MutL/HexB family.

This protein is involved in the repair of mismatches in DNA. It is required for dam-dependent methyl-directed DNA mismatch repair. May act as a 'molecular matchmaker', a protein that promotes the formation of a stable complex between two or more DNA-binding proteins in an ATP-dependent manner without itself being part of a final effector complex. The polypeptide is DNA mismatch repair protein MutL (Rhodopseudomonas palustris (strain BisB18)).